The following is a 126-amino-acid chain: Histone H2B-alpha (126 aa).

Positions 1 to 34 (MSAAEKKPASKAPAGKAPRDTMKSADKKRGKNRK) are disordered. N6-acetyllysine; alternate is present on residues lysine 6 and lysine 7. Residues lysine 6 and lysine 7 each participate in a glycyl lysine isopeptide (Lys-Gly) (interchain with G-Cter in SUMO); alternate cross-link. Serine 10 bears the Phosphoserine mark. At lysine 11 the chain carries N6-acetyllysine. A compositionally biased stretch (basic and acidic residues) spans 17-27 (APRDTMKSADK). Lysine 120 participates in a covalent cross-link: Glycyl lysine isopeptide (Lys-Gly) (interchain with G-Cter in ubiquitin).

Belongs to the histone H2B family. In terms of assembly, the nucleosome is a histone octamer containing two molecules each of H2A, H2B, H3 and H4 assembled in one H3-H4 heterotetramer and two H2A-H2B heterodimers. The octamer wraps approximately 147 bp of DNA. Interacts with rik1. Monoubiquitinated by the rhp6/ubc2-bre1 complex to form H2BK123ub1. H2BK123ub1 gives a specific tag for epigenetic transcriptional activation and is also prerequisite for H3K4me and H3K79me formation. H2BK123ub1 also modulates the formation of double-strand breaks during meiosis and is a prerequisite for DNA-damage checkpoint activation. Post-translationally, phosphorylated by shk1 to form H2BS10ph during progression through meiotic prophase. May be correlated with chromosome condensation. In terms of processing, acetylation of N-terminal lysines and particularly formation of H2BK11ac has a positive effect on transcription. Sumoylation to form H2BK6su or H2BK7su occurs preferentially near the telomeres and represses gene transcription.

Its subcellular location is the nucleus. It localises to the chromosome. Core component of nucleosome. Nucleosomes wrap and compact DNA into chromatin, limiting DNA accessibility to the cellular machineries which require DNA as a template. Histones thereby play a central role in transcription regulation, DNA repair, DNA replication and chromosomal stability. DNA accessibility is regulated via a complex set of post-translational modifications of histones, also called histone code, and nucleosome remodeling. The chain is Histone H2B-alpha (htb1) from Schizosaccharomyces pombe (strain 972 / ATCC 24843) (Fission yeast).